A 454-amino-acid chain; its full sequence is MREIVHVQVGQCGNQVGAKFWEVVSEEHGIDSAGTYKGDTDLQLERINVYYNEVAGSKYVPRAVLVDLEPGVLDSIRASSIGSMFRPDNFTHAQSGAGNNWAKGHYTEGAELVESVVDVVRKEAENCDCLQGFQICHSLGGGTGSGLGTLLISKIREEFPDRMMCTFSVMPSPKVSDTVVEPYNATLSIHQLVENADEVMCIDNEALYDICFRTLKLTTPTYGDLNHLVSGVMSGITACLRFPGQLNSDLRKLAVNLIPFPRLHFFLIGYAPLTARSAMGFRALTVPELTQQIFDSRNMMAASDPRHGRYLTASATFRGKMSTKEVDEQMHAVQTKNSSFFVEWIPNNIKSSVCDIPPKGMKMSATFIGNNTCIQELFKRIGLQFSAMFRRKAFLHWYTGEGMDEMEFTEAESNMNDLVSEYQQYQEASVDDEAMEDDAEAEGGAGQNEAVEEF.

Positions 11, 69, 138, 142, 143, 144, 204, and 226 each coordinate GTP. Position 69 (glutamate 69) interacts with Mg(2+). Residues glutamine 426 to phenylalanine 454 are disordered. Positions serine 429–alanine 441 are enriched in acidic residues.

The protein belongs to the tubulin family. In terms of assembly, dimer of alpha and beta chains. A typical microtubule is a hollow water-filled tube with an outer diameter of 25 nm and an inner diameter of 15 nM. Alpha-beta heterodimers associate head-to-tail to form protofilaments running lengthwise along the microtubule wall with the beta-tubulin subunit facing the microtubule plus end conferring a structural polarity. Microtubules usually have 13 protofilaments but different protofilament numbers can be found in some organisms and specialized cells. Mg(2+) serves as cofactor.

It localises to the cytoplasm. It is found in the cytoskeleton. The protein localises to the spindle. The protein resides in the nucleus. In terms of biological role, tubulin is the major constituent of microtubules, a cylinder consisting of laterally associated linear protofilaments composed of alpha- and beta-tubulin heterodimers. Microtubules grow by the addition of GTP-tubulin dimers to the microtubule end, where a stabilizing cap forms. Below the cap, tubulin dimers are in GDP-bound state, owing to GTPase activity of alpha-tubulin. This is the major beta tubulin of mitotic spindle. This chain is Tubulin beta-2 chain (BETC), found in Physarum polycephalum (Slime mold).